The following is a 223-amino-acid chain: Cytidine deaminase 3 (223 aa).

2 CMP/dCMP-type deaminase domains span residues 21–154 and 184–223; these read TEPM…FSPD and SDCS…WYRG. 62 to 64 contributes to the substrate binding site; that stretch reads NVE. His75 is a Zn(2+) binding site. The active-site Proton donor is the Glu77. Zn(2+)-binding residues include Cys110 and Cys113.

This sequence belongs to the cytidine and deoxycytidylate deaminase family. Homodimer. The cofactor is Zn(2+).

It catalyses the reaction cytidine + H2O + H(+) = uridine + NH4(+). It carries out the reaction 2'-deoxycytidine + H2O + H(+) = 2'-deoxyuridine + NH4(+). This enzyme scavenges exogenous and endogenous cytidine and 2'-deoxycytidine for UMP synthesis. This chain is Cytidine deaminase 3 (CDA3), found in Arabidopsis thaliana (Mouse-ear cress).